Reading from the N-terminus, the 51-residue chain is Insulin (51 aa).

Intrachain disulfides connect C7–C36, C19–C49, and C35–C40.

The protein belongs to the insulin family. In terms of assembly, heterodimer of a B chain and an A chain linked by two disulfide bonds.

The protein resides in the secreted. Its function is as follows. Insulin decreases blood glucose concentration. It increases cell permeability to monosaccharides, amino acids and fatty acids. It accelerates glycolysis, the pentose phosphate cycle, and glycogen synthesis in liver. This Myocastor coypus (Coypu) protein is Insulin (INS).